Reading from the N-terminus, the 580-residue chain is Frizzled-10-B (580 aa).

Positions 1 to 20 (MEPRVVTALLLSLAAALCSG) are cleaved as a signal peptide. At 21–224 (ISSINPDRSG…DVYWSKNDKK (204 aa)) the chain is on the extracellular side. Positions 29–150 (SGEGRCQAIE…NDPNYLCMEA (122 aa)) constitute an FZ domain. Disulfide bonds link Cys34/Cys95, Cys42/Cys88, Cys79/Cys117, Cys106/Cys147, and Cys110/Cys134. Asn48 carries an N-linked (GlcNAc...) asparagine glycan. Asn153 carries N-linked (GlcNAc...) asparagine glycosylation. The segment at 173–194 (RPNSGHEMYPKDPKGRSSCENS) is disordered. The segment covering 180 to 189 (MYPKDPKGRS) has biased composition (basic and acidic residues). The helical transmembrane segment at 225 to 245 (FAFIWIAIWSLLCFFSSAFTV) threads the bilayer. Residues 246–261 (LTFLVDPLRFKYPERP) are Cytoplasmic-facing. The helical transmembrane segment at 262–282 (IIFLSMCYCVYSVGYIIRLFA) threads the bilayer. At 283–309 (GADSIACDRDSGQLYVIQEGLESTGCT) the chain is on the extracellular side. Residues 310–330 (IVFLILYYFGMASSLWWVILT) traverse the membrane as a helical segment. At 331 to 350 (LTWFLAAGKKWGHEAIEANS) the chain is on the cytoplasmic side. A helical membrane pass occupies residues 351–371 (SYFHLAAWAIPAVKTIMILVM). Residues 372 to 392 (RRVAGDELTGVCYVGSMDVNA) are Extracellular-facing. The helical transmembrane segment at 393-413 (LTGFVLIPLACYLIIGTSFIL) threads the bilayer. Residues 414-442 (SGFVALFHIRRVMKTGGENTDKLEKLMVR) lie on the Cytoplasmic side of the membrane. Residues 443 to 463 (IGVFSVLYTVPATCVIACYFY) form a helical membrane-spanning segment. Topologically, residues 464–501 (ERLNMDFWKILATQDKCKMDSQTKTLDCTMTSSIPAVE) are extracellular. A helical membrane pass occupies residues 502–522 (IFMVKIFMLLVVGITSGMWIW). At 523-580 (TSKTVQSWQNVFSKSLKKRNRNKPASVITSAGIYKKPQQPPKIHHGKYESALRSPTCV) the chain is on the cytoplasmic side. The Lys-Thr-X-X-X-Trp motif, mediates interaction with the PDZ domain of Dvl family members motif lies at 525–530 (KTVQSW). The tract at residues 558–580 (KPQQPPKIHHGKYESALRSPTCV) is disordered. The PDZ-binding motif lies at 578–580 (TCV).

Belongs to the G-protein coupled receptor Fz/Smo family. Expressed in liver, lung, brain, testis, heart and ovary.

The protein resides in the cell membrane. Functionally, receptor for Wnt proteins. Most of frizzled receptors are coupled to the beta-catenin canonical signaling pathway, which leads to the activation of disheveled proteins, inhibition of GSK-3 kinase, nuclear accumulation of beta-catenin and activation of Wnt target genes. A second signaling pathway involving PKC and calcium fluxes has been seen for some family members, but it is not yet clear if it represents a distinct pathway or if it can be integrated in the canonical pathway, as PKC seems to be required for Wnt-mediated inactivation of GSK-3 kinase. Both pathways seem to involve interactions with G-proteins. May be involved in transduction and intercellular transmission of polarity information during tissue morphogenesis and/or in differentiated tissues. Activated by Wnt8. Could have an antagonizing activity in the morphogenesis during development. This Xenopus laevis (African clawed frog) protein is Frizzled-10-B (fzd10-b).